A 317-amino-acid polypeptide reads, in one-letter code: Melanocyte-stimulating hormone receptor (317 aa).

At 1–37 (MAVQGSQRRLLGSLNSTPTAIPQLGLAANQTGAWCLE) the chain is on the extracellular side. N-linked (GlcNAc...) asparagine glycosylation occurs at N29. The chain crosses the membrane as a helical span at residues 38 to 63 (VSIPDGLFLSLGLVSLVENVLVVATI). The Cytoplasmic portion of the chain corresponds to 64–72 (AKNRNLHSP). The chain crosses the membrane as a helical span at residues 73–93 (MYCFICCLALSDLLVSGGNVL). The Extracellular portion of the chain corresponds to 94–118 (ETAVILLLEAGALAARAAVVQQLDN). A helical membrane pass occupies residues 119-140 (VIDVITCSSMLSSLCFLGAIAV). The Cytoplasmic portion of the chain corresponds to 141-163 (DRYISIFYALRYHSIVTLPRARR). A helical transmembrane segment spans residues 164-183 (AIAAIWVASVLFSTLFIAYY). Residues 184–191 (DHAAVLLC) lie on the Extracellular side of the membrane. Residues 192–211 (LVVFFLAMLVLMAVLYVHML) traverse the membrane as a helical segment. The Cytoplasmic portion of the chain corresponds to 212-240 (ARACQHAQGIARLHKRQRPVHQGFGLKGA). Residues 241–266 (VTLTILLGIFFLCWGPFFLHLTLIVL) form a helical membrane-spanning segment. Residues 267-279 (CPQHPTCSCIFKN) lie on the Extracellular side of the membrane. A helical membrane pass occupies residues 280-300 (FNLFLALIICNAIIDPLIYAF). At 301–317 (RSQELRRTLKEVLTCSW) the chain is on the cytoplasmic side. C315 carries S-palmitoyl cysteine lipidation.

It belongs to the G-protein coupled receptor 1 family. As to quaternary structure, interacts with MGRN1, but does not undergo MGRN1-mediated ubiquitination; this interaction competes with GNAS-binding and thus inhibits agonist-induced cAMP production. Interacts with OPN3; the interaction results in a decrease in MC1R-mediated cAMP signaling and ultimately a decrease in melanin production in melanocytes.

Its subcellular location is the cell membrane. Functionally, receptor for MSH (alpha, beta and gamma) and ACTH. The activity of this receptor is mediated by G proteins which activate adenylate cyclase. Mediates melanogenesis, the production of eumelanin (black/brown) and phaeomelanin (red/yellow), via regulation of cAMP signaling in melanocytes. The protein is Melanocyte-stimulating hormone receptor (MC1R) of Pongo pygmaeus (Bornean orangutan).